The following is a 338-amino-acid chain: 1-aminocyclopropane-1-carboxylate deaminase (338 aa).

K51 is modified (N6-(pyridoxal phosphate)lysine). Catalysis depends on S78, which acts as the Nucleophile.

The protein belongs to the ACC deaminase/D-cysteine desulfhydrase family. Homotrimer. The cofactor is pyridoxal 5'-phosphate.

It carries out the reaction 1-aminocyclopropane-1-carboxylate + H2O = 2-oxobutanoate + NH4(+). In terms of biological role, catalyzes a cyclopropane ring-opening reaction, the irreversible conversion of 1-aminocyclopropane-1-carboxylate (ACC) to ammonia and alpha-ketobutyrate. Allows growth on ACC as a nitrogen source. This is 1-aminocyclopropane-1-carboxylate deaminase from Ralstonia pickettii (strain 12J).